The following is a 277-amino-acid chain: Tryptophan synthase alpha chain (277 aa).

Residues Glu50 and Asp61 each act as proton acceptor in the active site.

This sequence belongs to the TrpA family. As to quaternary structure, tetramer of two alpha and two beta chains.

The enzyme catalyses (1S,2R)-1-C-(indol-3-yl)glycerol 3-phosphate + L-serine = D-glyceraldehyde 3-phosphate + L-tryptophan + H2O. It participates in amino-acid biosynthesis; L-tryptophan biosynthesis; L-tryptophan from chorismate: step 5/5. Functionally, the alpha subunit is responsible for the aldol cleavage of indoleglycerol phosphate to indole and glyceraldehyde 3-phosphate. The chain is Tryptophan synthase alpha chain from Beijerinckia indica subsp. indica (strain ATCC 9039 / DSM 1715 / NCIMB 8712).